Reading from the N-terminus, the 1767-residue chain is Endo-alpha-N-acetylgalactosaminidase (1767 aa).

The N-terminal stretch at 1-39 is a signal peptide; the sequence is MNKGLFEKRCKYSIRKFSLGVASVMIGAAFFGTSPVLAD. Composition is skewed to basic and acidic residues over residues 61–75 and 84–111; these read KEND…KVGE and DGPK…DKPA. Disordered stretches follow at residues 61–124 and 301–324; these read KEND…VTPE and VKTD…GPEV. The segment covering 112-124 has biased composition (low complexity); it reads AAKPETPKTVTPE. A compositionally biased stretch (basic and acidic residues) spans 304–324; the sequence is DNQEGVKTEDTPAEKETGPEV. Ca(2+)-binding residues include aspartate 577, asparagine 579, aspartate 581, asparagine 583, and aspartate 588. Positions 602–893 are catalytic; the sequence is GWEKVKDITA…DVMTKYFQHF (292 aa). Substrate is bound at residue aspartate 658. The active-site Nucleophile is the aspartate 764. Glutamate 796 serves as the catalytic Proton donor/acceptor. Ca(2+) contacts are provided by aspartate 1233, glutamate 1235, glutamate 1281, tryptophan 1284, and aspartate 1411. A disordered region spans residues 1711 to 1730; it reads LASEQGKTPDYKQEIARPET. Basic and acidic residues predominate over residues 1717 to 1730; the sequence is KTPDYKQEIARPET. The short motif at 1735-1739 is the LPXTG sorting signal element; sequence LPATG. Threonine 1738 carries the post-translational modification Pentaglycyl murein peptidoglycan amidated threonine. Positions 1739 to 1767 are cleaved as a propeptide — removed by sortase; it reads GESQSDTALILASVSLALSALFVVKTKKD.

It belongs to the glycosyl hydrolase 101 family. A subfamily.

The protein localises to the secreted. It localises to the cell wall. The catalysed reaction is a 3-O-[beta-D-galactosyl-(1-&gt;3)-N-acetyl-alpha-D-galactosaminyl]-L-threonyl-[protein] + H2O = beta-D-galactosyl-(1-&gt;3)-N-acetyl-D-galactosamine + L-threonyl-[protein]. It carries out the reaction a 3-O-[beta-D-galactosyl-(1-&gt;3)-N-acetyl-alpha-D-galactosaminyl]-L-seryl-[protein] + H2O = beta-D-galactosyl-(1-&gt;3)-N-acetyl-D-galactosamine + L-seryl-[protein]. Involved in the breakdown of mucin-type O-linked glycans. Specifically removes the T-antigen disaccharide (Gal-beta-1,3-GalNAc-alpha) from extracellular host glycoproteins. Representative of a broadly important class of virulence factors. This Streptococcus pneumoniae serotype 4 (strain ATCC BAA-334 / TIGR4) protein is Endo-alpha-N-acetylgalactosaminidase.